Reading from the N-terminus, the 146-residue chain is Histone H2B (146 aa).

The span at Met-1–Ala-16 shows a compositional bias: basic and acidic residues. Positions Met-1–Ala-52 are disordered. N6-acetyllysine occurs at positions 7, 35, and 36. Residue Lys-142 forms a Glycyl lysine isopeptide (Lys-Gly) (interchain with G-Cter in ubiquitin) linkage.

The protein belongs to the histone H2B family. The nucleosome is a histone octamer containing two molecules each of H2A, H2B, H3 and H4 assembled in one H3-H4 heterotetramer and two H2A-H2B heterodimers. The octamer wraps approximately 147 bp of DNA. Post-translationally, can be acetylated to form H2BK6ac, H2BK33ac and H2BK34ac. Monoubiquitinated to form H2BK143ub1; may give a specific tag for epigenetic transcriptional activation.

It is found in the nucleus. It localises to the chromosome. Core component of nucleosome. Nucleosomes wrap and compact DNA into chromatin, limiting DNA accessibility to the cellular machineries which require DNA as a template. Histones thereby play a central role in transcription regulation, DNA repair, DNA replication and chromosomal stability. DNA accessibility is regulated via a complex set of post-translational modifications of histones, also called histone code, and nucleosome remodeling. This chain is Histone H2B (HIS2B), found in Nicotiana tabacum (Common tobacco).